A 273-amino-acid chain; its full sequence is Pantothenate synthetase (273 aa).

Residue 27-34 (MGALHQGH) coordinates ATP. Catalysis depends on His34, which acts as the Proton donor. A (R)-pantoate-binding site is contributed by Gln58. Gln58 is a beta-alanine binding site. Residue 144-147 (GKKD) participates in ATP binding. Gln150 is a (R)-pantoate binding site. ATP contacts are provided by residues Val173 and 181–184 (LSSR).

This sequence belongs to the pantothenate synthetase family. In terms of assembly, homodimer.

It is found in the cytoplasm. It carries out the reaction (R)-pantoate + beta-alanine + ATP = (R)-pantothenate + AMP + diphosphate + H(+). Its pathway is cofactor biosynthesis; (R)-pantothenate biosynthesis; (R)-pantothenate from (R)-pantoate and beta-alanine: step 1/1. In terms of biological role, catalyzes the condensation of pantoate with beta-alanine in an ATP-dependent reaction via a pantoyl-adenylate intermediate. This is Pantothenate synthetase from Nitratiruptor sp. (strain SB155-2).